We begin with the raw amino-acid sequence, 169 residues long: Protein YABBY 7 (169 aa).

The segment at 21 to 48 (CSFCATVLLVSVPCSSVLRVVAVQCGHC) adopts a C4-type zinc-finger fold. A disordered region spans residues 63–122 (SASIELTPQELDAGPPPGEYSDESSGDDREGRDAEDDAPAPAAAAVANKPPGRKQRTPSA).

Belongs to the YABBY family. As to expression, expressed in leaf sheaths and flowers.

The protein resides in the nucleus. The protein is Protein YABBY 7 (YAB7) of Oryza sativa subsp. japonica (Rice).